The sequence spans 870 residues: Leucine--tRNA ligase (870 aa).

Residues 42–52 (PYPSGKLHMGH) carry the 'HIGH' region motif. The short motif at 629-633 (KMSKS) is the 'KMSKS' region element. K632 contacts ATP.

This sequence belongs to the class-I aminoacyl-tRNA synthetase family.

It localises to the cytoplasm. It catalyses the reaction tRNA(Leu) + L-leucine + ATP = L-leucyl-tRNA(Leu) + AMP + diphosphate. The chain is Leucine--tRNA ligase from Azotobacter vinelandii (strain DJ / ATCC BAA-1303).